Consider the following 157-residue polypeptide: Ubiquitin-like protein 4A (157 aa).

One can recognise a Ubiquitin-like domain in the interval 1–76 (MQLTVKALQG…LNLVVKPLEK (76 aa)). Lys-48 is covalently cross-linked (Glycyl lysine isopeptide (Lys-Gly) (interchain with G-Cter in ubiquitin)). Ser-90 carries the post-translational modification Phosphoserine. Residues 96–138 (WQLISKVLARHFSAADASRVLEQPQRDYERSLSRLTLDDIERL) are required and sufficient for interaction with BAG6.

In terms of assembly, component of the BAG6/BAT3 complex, at least composed of BAG6, UBL4A and GET4/TRC35. Interacts with BAG6; the interaction is direct and required for UBL4A protein stability. Interacts with USP13; may be indirect via BAG6. Polyubiquitinated. Ubiquitination by AMFR and deubiquitination by USP13 may regulate the interaction between the BAG6/BAT complex and SGTA and therefore may regulate client proteins fate.

Its subcellular location is the cytoplasm. It localises to the cytosol. It is found in the nucleus. As part of a cytosolic protein quality control complex, the BAG6/BAT3 complex, maintains misfolded and hydrophobic patches-containing proteins in a soluble state and participates in their proper delivery to the endoplasmic reticulum or alternatively can promote their sorting to the proteasome where they undergo degradation. The BAG6/BAT3 complex is involved in the post-translational delivery of tail-anchored/type II transmembrane proteins to the endoplasmic reticulum membrane. Recruited to ribosomes, it interacts with the transmembrane region of newly synthesized tail-anchored proteins and together with SGTA and ASNA1 mediates their delivery to the endoplasmic reticulum. Client proteins that cannot be properly delivered to the endoplasmic reticulum are ubiquitinated and sorted to the proteasome. Similarly, the BAG6/BAT3 complex also functions as a sorting platform for proteins of the secretory pathway that are mislocalized to the cytosol either delivering them to the proteasome for degradation or to the endoplasmic reticulum. The BAG6/BAT3 complex also plays a role in the endoplasmic reticulum-associated degradation (ERAD), a quality control mechanism that eliminates unwanted proteins of the endoplasmic reticulum through their retrotranslocation to the cytosol and their targeting to the proteasome. It maintains these retrotranslocated proteins in an unfolded yet soluble state condition in the cytosol to ensure their proper delivery to the proteasome. This chain is Ubiquitin-like protein 4A (UBL4A), found in Pongo abelii (Sumatran orangutan).